Here is a 128-residue protein sequence, read N- to C-terminus: Flagellar basal body rod protein FlgB (128 aa).

The protein belongs to the flagella basal body rod proteins family. The basal body constitutes a major portion of the flagellar organelle and consists of a number of rings mounted on a central rod. In Gram-negative bacteria, at least four rings, L, P, S and M are present, whereas Gram-positive bacteria lack the L and P rings. The rod consists of about 26 subunits of FlgG in the distal portion, and FlgB, FlgC and FlgF build up the proximal portion of the rod with about 6 subunits each. Rod assembly occurs by export via the flagellum-specific pathway of its constituent proteins and by their incorporation into the rod structure in the probable order of FlgB, FlgC, FlgF and FlgG. Another protein, FliE, also assembles onto the stable rod structure.

The protein resides in the bacterial flagellum basal body. Structural component of flagellum, the bacterial motility apparatus. Part of the rod structure of flagellar basal body. This Cereibacter sphaeroides (strain ATCC 17023 / DSM 158 / JCM 6121 / CCUG 31486 / LMG 2827 / NBRC 12203 / NCIMB 8253 / ATH 2.4.1.) (Rhodobacter sphaeroides) protein is Flagellar basal body rod protein FlgB.